The primary structure comprises 153 residues: NAD(P)H-quinone oxidoreductase subunit N (153 aa).

The protein belongs to the complex I NdhN subunit family. In terms of assembly, NDH-1 can be composed of about 15 different subunits; different subcomplexes with different compositions have been identified which probably have different functions.

The protein localises to the cellular thylakoid membrane. It catalyses the reaction a plastoquinone + NADH + (n+1) H(+)(in) = a plastoquinol + NAD(+) + n H(+)(out). The enzyme catalyses a plastoquinone + NADPH + (n+1) H(+)(in) = a plastoquinol + NADP(+) + n H(+)(out). Its function is as follows. NDH-1 shuttles electrons from an unknown electron donor, via FMN and iron-sulfur (Fe-S) centers, to quinones in the respiratory and/or the photosynthetic chain. The immediate electron acceptor for the enzyme in this species is believed to be plastoquinone. Couples the redox reaction to proton translocation, and thus conserves the redox energy in a proton gradient. Cyanobacterial NDH-1 also plays a role in inorganic carbon-concentration. In Synechococcus sp. (strain RCC307), this protein is NAD(P)H-quinone oxidoreductase subunit N.